The following is a 367-amino-acid chain: Heme A synthase (367 aa).

5 helical membrane-spanning segments follow: residues 12–32, 99–119, 127–147, 163–183, and 198–218; these read GAVR…VAVG, LLGR…WWQG, LGLL…WIMV, LALH…LAAG, and ATAL…GLVA. His-264 is a binding site for heme. 3 consecutive transmembrane segments (helical) span residues 266-286, 296-316, and 317-337; these read VTAY…RLTG, GVVI…LLAV, and PLWA…MATV. His-324 contacts heme.

The protein belongs to the COX15/CtaA family. Type 2 subfamily. In terms of assembly, interacts with CtaB. Heme b is required as a cofactor.

The protein localises to the cell membrane. It carries out the reaction Fe(II)-heme o + 2 A + H2O = Fe(II)-heme a + 2 AH2. It participates in porphyrin-containing compound metabolism; heme A biosynthesis; heme A from heme O: step 1/1. Functionally, catalyzes the conversion of heme O to heme A by two successive hydroxylations of the methyl group at C8. The first hydroxylation forms heme I, the second hydroxylation results in an unstable dihydroxymethyl group, which spontaneously dehydrates, resulting in the formyl group of heme A. The sequence is that of Heme A synthase from Methylobacterium radiotolerans (strain ATCC 27329 / DSM 1819 / JCM 2831 / NBRC 15690 / NCIMB 10815 / 0-1).